The primary structure comprises 289 residues: Golgi to ER traffic protein 2 (289 aa).

Basic and acidic residues predominate over residues 1-10; the sequence is MSEVSEAEKR. Residues 1-68 are disordered; sequence MSEVSEAEKR…LQRGSNSGQS (68 aa). Over 1 to 153 the chain is Cytoplasmic; it reads MSEVSEAEKR…VGVHQFQVRQ (153 aa). Basic residues predominate over residues 11–21; the sequence is RILREKRKQKF. The span at 33-68 shows a compositional bias: polar residues; the sequence is ITTQQPGGASGDSTVTSAEISDNEGSLQRGSNSGQS. A helical transmembrane segment spans residues 154 to 173; that stretch reads LKAYMLLLRWAILLPFIYYV. The Lumenal portion of the chain corresponds to 174–196; the sequence is MHPGTAHWLHTSRFLHFVMEPRN. Residues 197–216 form a helical membrane-spanning segment; it reads FFMVFTTFEVASISIYYQVL. Topologically, residues 217 to 263 are cytoplasmic; sequence LTLERTNKVNSLSYSSKLVTWAGLVPDGMLPIDNLQGKVVVALHYWD. A helical membrane pass occupies residues 264-284; sequence ILSMYLTDLSLCLVAAGLMKY. Over 285-289 the chain is Lumenal; that stretch reads YHAAP.

This sequence belongs to the GET2 family. As to quaternary structure, component of the Golgi to ER traffic (GET) complex, which is composed of GET1, GET2 and GET3. Within the complex, GET1 and GET2 form a heterotetramer which is stabilized by phosphatidylinositol binding and which binds to the GET3 homodimer.

It is found in the endoplasmic reticulum membrane. It localises to the golgi apparatus membrane. Required for the post-translational delivery of tail-anchored (TA) proteins to the endoplasmic reticulum. Together with GET1, acts as a membrane receptor for soluble GET3, which recognizes and selectively binds the transmembrane domain of TA proteins in the cytosol. The GET complex cooperates with the HDEL receptor ERD2 to mediate the ATP-dependent retrieval of resident ER proteins that contain a C-terminal H-D-E-L retention signal from the Golgi to the ER. The chain is Golgi to ER traffic protein 2 from Eremothecium gossypii (strain ATCC 10895 / CBS 109.51 / FGSC 9923 / NRRL Y-1056) (Yeast).